A 148-amino-acid polypeptide reads, in one-letter code: Probable TtuB-protein conjugate cleaving protease (148 aa).

One can recognise an MPN domain in the interval His-22–Leu-148. Residue Glu-47 is the Proton donor/acceptor of the active site. The Zn(2+) site is built by His-101, His-103, and Asp-114. The JAMM motif signature appears at His-101–Asp-114.

The protein belongs to the peptidase M67B family. The cofactor is Zn(2+).

Probable metalloprotease that cleaves the ubiquitin-like modifier protein TtuB from protein conjugates, hydrolyzing the isopeptide bond between a lysine residue of the target protein and the C-terminal glycine of the modifier protein. Does not seem to work for all the TtuB conjugates. This chain is Probable TtuB-protein conjugate cleaving protease, found in Thermus thermophilus (strain ATCC BAA-163 / DSM 7039 / HB27).